A 323-amino-acid chain; its full sequence is GDP-L-fucose synthase 1 (323 aa).

Ala2 bears the N-acetylalanine mark. NADP(+) is bound at residue 23 to 29 (GHRGLVG). Tyr149 serves as the catalytic Proton donor/acceptor. NADP(+) contacts are provided by residues Lys153, 176–179 (PTNL), and His192. Positions 200, 215, 222, and 282 each coordinate substrate.

It belongs to the NAD(P)-dependent epimerase/dehydratase family. Fucose synthase subfamily. As to quaternary structure, binds and stabilizes MUR1. Homodimer. In terms of tissue distribution, highly expressed in roots and flowers, less abundant in leaves, stems and siliques.

It carries out the reaction GDP-beta-L-fucose + NADP(+) = GDP-4-dehydro-alpha-D-rhamnose + NADPH + H(+). It participates in nucleotide-sugar biosynthesis; GDP-L-fucose biosynthesis via de novo pathway; GDP-L-fucose from GDP-alpha-D-mannose: step 2/2. Functionally, catalyzes the two-step NADP-dependent conversion of GDP-4-dehydro-6-deoxy-D-mannose to GDP-fucose, involving an epimerase and a reductase reaction. Not involved in the synthesis of GDP-L-galactose from GDP-D-mannose. The sequence is that of GDP-L-fucose synthase 1 (GER1) from Arabidopsis thaliana (Mouse-ear cress).